The following is a 286-amino-acid chain: Deaminated glutathione amidase (286 aa).

Residues 4 to 252 (ANVALLQLCS…VSALKVKIET (249 aa)) enclose the CN hydrolase domain. Catalysis depends on glutamate 42, which acts as the Proton acceptor. Lysine 115 is a catalytic residue. Residue cysteine 157 is the Nucleophile of the active site.

The protein belongs to the carbon-nitrogen hydrolase superfamily. NIT1/NIT2 family.

The catalysed reaction is N-(4-oxoglutaryl)-L-cysteinylglycine + H2O = L-cysteinylglycine + 2-oxoglutarate. Hydrolyzes deaminated glutathione (dGSH, 2-oxoglutaramate) to alpha-ketoglutarate (alpha-KG) and cysteinylglycine (specific activity 6.50 umol/min/mg), has less activity against alpha-ketoglutaramate (a-KGM, specific activity 0.20 umol/min/mg), very little activity on glutathione and none on L-glutamine. May function as a metabolite repair enzyme. The chain is Deaminated glutathione amidase from Yersinia enterocolitica.